Reading from the N-terminus, the 245-residue chain is 1-(5-phosphoribosyl)-5-[(5-phosphoribosylamino)methylideneamino] imidazole-4-carboxamide isomerase (245 aa).

Asp-8 (proton acceptor) is an active-site residue. The Proton donor role is filled by Asp-129.

The protein belongs to the HisA/HisF family.

Its subcellular location is the cytoplasm. It catalyses the reaction 1-(5-phospho-beta-D-ribosyl)-5-[(5-phospho-beta-D-ribosylamino)methylideneamino]imidazole-4-carboxamide = 5-[(5-phospho-1-deoxy-D-ribulos-1-ylimino)methylamino]-1-(5-phospho-beta-D-ribosyl)imidazole-4-carboxamide. The protein operates within amino-acid biosynthesis; L-histidine biosynthesis; L-histidine from 5-phospho-alpha-D-ribose 1-diphosphate: step 4/9. In Trichlorobacter lovleyi (strain ATCC BAA-1151 / DSM 17278 / SZ) (Geobacter lovleyi), this protein is 1-(5-phosphoribosyl)-5-[(5-phosphoribosylamino)methylideneamino] imidazole-4-carboxamide isomerase.